A 474-amino-acid chain; its full sequence is Synaptotagmin-17 (474 aa).

The tract at residues 54 to 112 is disordered; sequence PAQTPPWLVSNRSEDKEGDSDNTTSEPPATPQDTSPDRRRSSSDTSRSTYSLTRRISSL. Over residues 96–112 the composition is skewed to low complexity; sequence SDTSRSTYSLTRRISSL. 2 consecutive C2 domains span residues 184-310 and 321-455; these read QLGM…HWWK and ELGE…EQWH.

Belongs to the synaptotagmin family.

The protein localises to the membrane. May play a role in dendrite formation by melanocytes. The chain is Synaptotagmin-17 (syt17) from Xenopus tropicalis (Western clawed frog).